The chain runs to 217 residues: Large ribosomal subunit protein uL1 (217 aa).

The residue at position 2 (S2) is an N-acetylserine. Y11 carries the phosphotyrosine modification. K91 and K106 each carry N6-acetyllysine. K118 is subject to N6-acetyllysine; alternate. Residue K118 forms a Glycyl lysine isopeptide (Lys-Gly) (interchain with G-Cter in SUMO1); alternate linkage. K118 is covalently cross-linked (Glycyl lysine isopeptide (Lys-Gly) (interchain with G-Cter in SUMO2); alternate).

The protein belongs to the universal ribosomal protein uL1 family. As to quaternary structure, component of the large ribosomal subunit.

It localises to the cytoplasm. Functionally, component of the large ribosomal subunit. The ribosome is a large ribonucleoprotein complex responsible for the synthesis of proteins in the cell. In Macaca fascicularis (Crab-eating macaque), this protein is Large ribosomal subunit protein uL1 (RPL10A).